The chain runs to 223 residues: ATP phosphoribosyltransferase (223 aa).

This sequence belongs to the ATP phosphoribosyltransferase family. Short subfamily. In terms of assembly, heteromultimer composed of HisG and HisZ subunits.

The protein resides in the cytoplasm. The catalysed reaction is 1-(5-phospho-beta-D-ribosyl)-ATP + diphosphate = 5-phospho-alpha-D-ribose 1-diphosphate + ATP. Its pathway is amino-acid biosynthesis; L-histidine biosynthesis; L-histidine from 5-phospho-alpha-D-ribose 1-diphosphate: step 1/9. Functionally, catalyzes the condensation of ATP and 5-phosphoribose 1-diphosphate to form N'-(5'-phosphoribosyl)-ATP (PR-ATP). Has a crucial role in the pathway because the rate of histidine biosynthesis seems to be controlled primarily by regulation of HisG enzymatic activity. This chain is ATP phosphoribosyltransferase, found in Novosphingobium aromaticivorans (strain ATCC 700278 / DSM 12444 / CCUG 56034 / CIP 105152 / NBRC 16084 / F199).